A 275-amino-acid chain; its full sequence is NH(3)-dependent NAD(+) synthetase (275 aa).

50–57 (GISGGVDS) is a binding site for ATP. Asp56 contributes to the Mg(2+) binding site. Residue Arg147 coordinates deamido-NAD(+). ATP is bound at residue Thr167. Residue Glu172 participates in Mg(2+) binding. Residues Lys180 and Asp187 each coordinate deamido-NAD(+). 2 residues coordinate ATP: Lys196 and Thr218. 267–268 (HK) contacts deamido-NAD(+).

This sequence belongs to the NAD synthetase family. Homodimer.

The enzyme catalyses deamido-NAD(+) + NH4(+) + ATP = AMP + diphosphate + NAD(+) + H(+). It participates in cofactor biosynthesis; NAD(+) biosynthesis; NAD(+) from deamido-NAD(+) (ammonia route): step 1/1. Its function is as follows. Catalyzes the ATP-dependent amidation of deamido-NAD to form NAD. Uses ammonia as a nitrogen source. This Pseudomonas putida (strain GB-1) protein is NH(3)-dependent NAD(+) synthetase.